The primary structure comprises 1232 residues: Anoctamin-8 (1232 aa).

Residues 1-32 (MAEAASGAGGTSLEGERGKRPPPEGEPAAPAS) are disordered. A2 carries the N-acetylalanine modification. Over 2–244 (AEAASGAGGT…DDICDYFGVK (243 aa)) the chain is Extracellular. The segment covering 14–23 (EGERGKRPPP) has biased composition (basic and acidic residues). The helical transmembrane segment at 245–265 (IAMYFAWLGFYTSAMVYPAVF) threads the bilayer. Residues 266–281 (GSVLYTFTEADQTSRD) lie on the Cytoplasmic side of the membrane. The helical transmembrane segment at 282–302 (VSCVVFALFNVIWSTLFLEEW) threads the bilayer. Over 303-356 (KRRGAELAYKWGTLDSPGEAVEEPRPQFRGVRRISPITRAEEFYYPPWKRLLFQ) the chain is Extracellular. Residue S318 is modified to Phosphoserine. A helical membrane pass occupies residues 357–377 (LLVSLPLCLACLVCVFLLMLG). Over 378–400 (CFQLQELVLSVKGLPRLARFLPK) the chain is Cytoplasmic. A helical membrane pass occupies residues 401-421 (VMLALLVSVSAEGYKKLAIWL). Residues 422–437 (NDMENYRLESAYEKHL) lie on the Extracellular side of the membrane. A helical transmembrane segment spans residues 438–458 (IIKVVLFQFVNSYLSLFYIGF). Residues 459-750 (YLKDMERLKE…YEDTFQDYQE (292 aa)) lie on the Cytoplasmic side of the membrane. The tract at residues 524–650 (RRLEPQADEG…SPTMVEKGLE (127 aa)) is disordered. Residues 532 to 551 (EGGGGGSGGGGRRCLSGGCG) are compositionally biased toward gly residues. Over residues 582–606 (EEDEDDEEEEDEEEEEDEEEGEEGG) the composition is skewed to acidic residues. S669 is subject to Phosphoserine. The interval 681-728 (RAGGEGRDQGPDGGPDPEPGSNSDSTRRQRRQNRSSWIDPPEEEHSPQ) is disordered. A helical membrane pass occupies residues 751–771 (MFVQFGYVVLFSSAFPLAALC). Residues 772 to 807 (ALVNNLIEIRSDAFKLCTGLQRPFGQRVESIGQWQK) lie on the Extracellular side of the membrane. Residue S801 is modified to Phosphoserine; by FAM20C. A helical transmembrane segment spans residues 808-828 (VMEAMGVLAIVVNCYLIGQCG). Over 829–841 (QLQRLFPWLSPEA) the chain is Cytoplasmic. The helical transmembrane segment at 842 to 862 (AIVSVVVLEHFALLLKYLIHV) threads the bilayer. The Extracellular segment spans residues 863 to 1232 (AIPDIPGWVA…QAVCWPSGWH (370 aa)). Disordered regions lie at residues 888–970 (RHER…GSLL), 997–1152 (LAAA…WQWD), and 1174–1232 (PPCA…SGWH). Residues 904–932 (RREEEERQRHAEHHARREHDSGGREEARA) show a composition bias toward basic and acidic residues. Low complexity-rich tracts occupy residues 933-953 (EGSG…AKGS) and 997-1006 (LAAAGAGATT). An Asymmetric dimethylarginine; alternate modification is found at R1020. At R1020 the chain carries Omega-N-methylarginine; alternate. Residues 1031–1043 (KSPETRRDSERSH) show a composition bias toward basic and acidic residues. A compositionally biased stretch (polar residues) spans 1078–1087 (TPSSGSSRVQ). Pro residues-rich tracts occupy residues 1130–1145 (PAPP…PTPP) and 1197–1221 (LPPP…PSPS).

This sequence belongs to the anoctamin family. As to expression, expressed in embryonic stem cells, fetal brain and neural tissues.

It is found in the cell membrane. Its function is as follows. Does not exhibit calcium-activated chloride channel (CaCC) activity. The chain is Anoctamin-8 (ANO8) from Homo sapiens (Human).